The following is a 605-amino-acid chain: Pyruvate decarboxylase 2 (605 aa).

Substrate is bound by residues aspartate 68 and histidine 155. The tract at residues 433–515 (DSWFNCQKLK…FLINNGGYTI (83 aa)) is thiamine pyrophosphate binding. Residues aspartate 483, asparagine 510, and glycine 512 each contribute to the Mg(2+) site. Glutamate 516 provides a ligand contact to substrate.

The protein belongs to the TPP enzyme family. In terms of assembly, homotetramer. A metal cation serves as cofactor. It depends on thiamine diphosphate as a cofactor.

The enzyme catalyses a 2-oxocarboxylate + H(+) = an aldehyde + CO2. This Oryza sativa subsp. japonica (Rice) protein is Pyruvate decarboxylase 2 (PDC2).